The chain runs to 498 residues: N-acyl-D-aspartate deacylase (498 aa).

The disordered stretch occupies residues 478–498 (AERPGQVLAPGDAIPWSQQSE).

The protein belongs to the metallo-dependent hydrolases superfamily. N-acyl-D-amino-acid deacylase family. It depends on Zn(2+) as a cofactor.

Its subcellular location is the cytoplasm. It carries out the reaction an N-acyl-D-aspartate + H2O = D-aspartate + a carboxylate. The protein is N-acyl-D-aspartate deacylase of Alcaligenes xylosoxydans xylosoxydans (Achromobacter xylosoxidans).